The chain runs to 238 residues: Tyrosine recombinase XerD-like (238 aa).

Residues 1–75 form the Core-binding (CB) domain; the sequence is MKLPNEIDEY…SANQYLLFLY (75 aa). Residues 90-238 enclose the Tyr recombinase domain; it reads VQKKSQTAQS…TITTLEKYYR (149 aa). Catalysis depends on residues Lys-154 and Arg-204. Catalysis depends on Tyr-236, which acts as the O-(3'-phospho-DNA)-tyrosine intermediate.

Belongs to the 'phage' integrase family. XerD-like subfamily.

The protein resides in the cytoplasm. Functionally, putative tyrosine recombinase. Not involved in the cutting and rejoining of the recombining DNA molecules on dif(SL) site. This Lactococcus lactis subsp. lactis (strain IL1403) (Streptococcus lactis) protein is Tyrosine recombinase XerD-like (ynbA).